The sequence spans 221 residues: Large ribosomal subunit protein uL3 (221 aa).

This sequence belongs to the universal ribosomal protein uL3 family. Part of the 50S ribosomal subunit. Forms a cluster with proteins L14 and L19.

In terms of biological role, one of the primary rRNA binding proteins, it binds directly near the 3'-end of the 23S rRNA, where it nucleates assembly of the 50S subunit. The protein is Large ribosomal subunit protein uL3 of Chlamydia trachomatis serovar A (strain ATCC VR-571B / DSM 19440 / HAR-13).